Here is a 184-residue protein sequence, read N- to C-terminus: MSRIGKLPIKLPQGVTLRGPEEDIVYVKGPKGELSQYIDPAISVTIENDTVTLHRRTNQKRHKALHGLYRVLINNMIIGVSTGFTKSLELVGVGYKASVQGNALDLDLGYSHKIYFVIPPEIKVQAETTKGKNPLVHLEGIDKQLLGQVAAKIKTLRKVEPYKGKGIRYLGEQIRRKAGKTASK.

It belongs to the universal ribosomal protein uL6 family. As to quaternary structure, part of the 50S ribosomal subunit.

In terms of biological role, this protein binds to the 23S rRNA, and is important in its secondary structure. It is located near the subunit interface in the base of the L7/L12 stalk, and near the tRNA binding site of the peptidyltransferase center. This is Large ribosomal subunit protein uL6 from Amoebophilus asiaticus (strain 5a2).